We begin with the raw amino-acid sequence, 468 residues long: Cysteine--tRNA ligase (468 aa).

C29 is a Zn(2+) binding site. Residues 31–41 carry the 'HIGH' region motif; the sequence is PTVYNYIHIGN. Zn(2+) is bound by residues C209, H234, and E238. A 'KMSKS' region motif is present at residues 266 to 270; sequence KMSKS. ATP is bound at residue K269. At S270 the chain carries Phosphoserine.

It belongs to the class-I aminoacyl-tRNA synthetase family. In terms of assembly, monomer. It depends on Zn(2+) as a cofactor.

It is found in the cytoplasm. It catalyses the reaction tRNA(Cys) + L-cysteine + ATP = L-cysteinyl-tRNA(Cys) + AMP + diphosphate. This is Cysteine--tRNA ligase from Oceanobacillus iheyensis (strain DSM 14371 / CIP 107618 / JCM 11309 / KCTC 3954 / HTE831).